The chain runs to 979 residues: Disks large-associated protein 3 (979 aa).

The span at 1–10 shows a compositional bias: basic and acidic residues; it reads MRGYHGDRGS. Disordered stretches follow at residues 1–20, 52–95, 136–169, 182–291, 400–429, and 537–581; these read MRGY…FADQ, AGLG…MYPG, FHTL…SPSR, AKSH…CLEG, AMGD…TRRS, and FRKA…RCSS. Ser58 carries the post-translational modification Phosphoserine. The span at 73–86 shows a compositional bias: gly residues; the sequence is PEGGPAGAGVGGGS. The span at 190 to 202 shows a compositional bias: basic and acidic residues; sequence PGKRDYNGPKAEG. A compositionally biased stretch (gly residues) spans 203–218; that stretch reads RGGSGGDSYPGPGSGG. Positions 221 to 246 are enriched in basic residues; that stretch reads TSHHHHHHHHHHHHQSRHGKRSKSKD. Residues Ser406, Ser409, Ser412, and Ser416 each carry the phosphoserine modification. A compositionally biased stretch (pro residues) spans 540 to 549; that stretch reads APPPIPPGSQ. 2 positions are modified to phosphoserine: Ser643 and Ser645. Disordered regions lie at residues 741–790 and 908–940; these read EGYP…RASP and EEKK…DRQR. Basic and acidic residues-rich tracts occupy residues 769–779 and 927–940; these read GRRDSWIERGS and PVKE…DRQR. Residues Ser932, Ser935, and Ser967 each carry the phosphoserine modification.

Belongs to the SAPAP family. In terms of assembly, interacts with DLG4/PSD-95.

Its subcellular location is the cell membrane. It localises to the postsynaptic density. The protein resides in the synapse. Its function is as follows. May play a role in the molecular organization of synapses and neuronal cell signaling. Could be an adapter protein linking ion channel to the subsynaptic cytoskeleton. May induce enrichment of PSD-95/SAP90 at the plasma membrane. The protein is Disks large-associated protein 3 (DLGAP3) of Homo sapiens (Human).